The primary structure comprises 245 residues: Eukaryotic translation initiation factor 6 (245 aa).

Tyr113 carries the post-translational modification Phosphotyrosine. The residue at position 165 (Thr165) is a Phosphothreonine. At Ser166 the chain carries Phosphoserine. 2 positions are modified to phosphoserine; by CK1: Ser174 and Ser175. Ser235 is subject to Phosphoserine; by PKC. 2 positions are modified to phosphoserine: Ser239 and Ser243.

This sequence belongs to the eIF-6 family. In terms of assembly, monomer. Associates with the 60S ribosomal subunit. Interacts with RACK1. Interacts with DICER1, AGO2, TARBP2, MOV10 and RPL7A; they form a large RNA-induced silencing complex (RISC). Phosphorylation at Ser-174 and Ser-175 by CSNK1D/CK1 promotes nuclear export. In terms of processing, ufmylated by UFL1. Detected in bladder, duodenum, liver, esophagus, pancreas, adipose tissue, megakaryocytes and testis with lower levels in muscle (at protein level).

The protein resides in the cytoplasm. The protein localises to the nucleus. It localises to the nucleolus. Functionally, binds to the 60S ribosomal subunit and prevents its association with the 40S ribosomal subunit to form the 80S initiation complex in the cytoplasm. Behaves as a stimulatory translation initiation factor downstream insulin/growth factors. Is also involved in ribosome biogenesis. Associates with pre-60S subunits in the nucleus and is involved in its nuclear export. Cytoplasmic release of TIF6 from 60S subunits and nuclear relocalization is promoted by a RACK1 (RACK1)-dependent protein kinase C activity. In tissues responsive to insulin, controls fatty acid synthesis and glycolysis by exerting translational control of adipogenic transcription factors such as CEBPB, CEBPD and ATF4 that have G/C rich or uORF in their 5'UTR. Required for ROS-dependent megakaryocyte maturation and platelets formation, controls the expression of mitochondrial respiratory chain genes involved in reactive oxygen species (ROS) synthesis. Involved in miRNA-mediated gene silencing by the RNA-induced silencing complex (RISC). Required for both miRNA-mediated translational repression and miRNA-mediated cleavage of complementary mRNAs by RISC. Modulates cell cycle progression and global translation of pre-B cells, its activation seems to be rate-limiting in tumorigenesis and tumor growth. The protein is Eukaryotic translation initiation factor 6 (Eif6) of Mus musculus (Mouse).